A 548-amino-acid polypeptide reads, in one-letter code: MPGDMGPPKQGGTRYGSISSPPSPGPQQAPPGGTYLSEKIPIPDTESGAFSLRKLWAFTGPGFLMSIAFLDPGNIESDLQAGAVAGFKLLWVLLWATVLGLLCQRLAARLGVVTGKDLGEVCHLYYPKVPRILLWLTIELAIVGSDMQEVIGTAIAFSLLSAGRIPLWGGVLITIVDTFFFLFLDNYGLRKLEAFFGFLITIMALTFGYEYVVARPAQGALLQGLFLPSCAGCGQPELLQAVGIVGAIIMPHNIYLHSSLVKSREVDRSRRADIREANMYFLIEATIALSVSFLINLFVMAVFGQAFYKQTNQAAFNICANSSLHDYATIFPRNNLTVAVDIYQGGVILGCLFGPAALYIWAVGLLAAGQSSTMTGTYAGQFVMEGFLKLRWSRFARVLLTRSCAILPTVLVAVFRDLRDLSGLNDLLNVLQSLLLPFAVLPILTFTSMPAVMQEFANGLVSKVISSSIMVLVCAVNLYFVISYVPSLPHPDYFSLVALLAAAYLGLTTYLVWTCLITQGATLLAHSSHQRFLYGLPEEDQENGRTSG.

Residues 1-38 (MPGDMGPPKQGGTRYGSISSPPSPGPQQAPPGGTYLSE) form a disordered region. Residues 1–55 (MPGDMGPPKQGGTRYGSISSPPSPGPQQAPPGGTYLSEKIPIPDTESGAFSLRKL) are Cytoplasmic-facing. Residues 56–73 (WAFTGPGFLMSIAFLDPG) form a helical membrane-spanning segment. Residues 74–82 (NIESDLQAG) lie on the Extracellular side of the membrane. Residues 83–102 (AVAGFKLLWVLLWATVLGLL) form a helical membrane-spanning segment. The Cytoplasmic portion of the chain corresponds to 103-139 (CQRLAARLGVVTGKDLGEVCHLYYPKVPRILLWLTIE). A helical transmembrane segment spans residues 140–160 (LAIVGSDMQEVIGTAIAFSLL). The Extracellular segment spans residues 161 to 164 (SAGR). Residues 165–184 (IPLWGGVLITIVDTFFFLFL) form a helical membrane-spanning segment. The Cytoplasmic segment spans residues 185 to 193 (DNYGLRKLE). A helical membrane pass occupies residues 194-214 (AFFGFLITIMALTFGYEYVVA). Over 215-237 (RPAQGALLQGLFLPSCAGCGQPE) the chain is Extracellular. A helical transmembrane segment spans residues 238 to 256 (LLQAVGIVGAIIMPHNIYL). Residues 257–284 (HSSLVKSREVDRSRRADIREANMYFLIE) are Cytoplasmic-facing. The chain crosses the membrane as a helical span at residues 285–304 (ATIALSVSFLINLFVMAVFG). Residues 305–346 (QAFYKQTNQAAFNICANSSLHDYATIFPRNNLTVAVDIYQGG) lie on the Extracellular side of the membrane. N-linked (GlcNAc...) asparagine glycans are attached at residues Asn-321 and Asn-335. Residues 347–366 (VILGCLFGPAALYIWAVGLL) form a helical membrane-spanning segment. Residues 367–397 (AAGQSSTMTGTYAGQFVMEGFLKLRWSRFAR) lie on the Cytoplasmic side of the membrane. A helical transmembrane segment spans residues 398–415 (VLLTRSCAILPTVLVAVF). Topologically, residues 416 to 426 (RDLRDLSGLND) are extracellular. The chain crosses the membrane as a helical span at residues 427 to 447 (LLNVLQSLLLPFAVLPILTFT). The Cytoplasmic segment spans residues 448 to 463 (SMPAVMQEFANGLVSK). The helical transmembrane segment at 464–485 (VISSSIMVLVCAVNLYFVISYV) threads the bilayer. Over 486 to 493 (PSLPHPDY) the chain is Extracellular. A helical membrane pass occupies residues 494–513 (FSLVALLAAAYLGLTTYLVW). The Cytoplasmic portion of the chain corresponds to 514–548 (TCLITQGATLLAHSSHQRFLYGLPEEDQENGRTSG).

Belongs to the NRAMP family.

It is found in the late endosome membrane. Its subcellular location is the lysosome membrane. The catalysed reaction is Zn(2+)(in) + H(+)(out) = Zn(2+)(out) + H(+)(in). It catalyses the reaction Fe(2+)(in) + H(+)(out) = Fe(2+)(out) + H(+)(in). It carries out the reaction Mn(2+)(in) + H(+)(out) = Mn(2+)(out) + H(+)(in). Macrophage-specific antiporter that fluxes metal ions in either direction against a proton gradient. Localized to late endosomal lysosomal membranes, delivers bivalent cations from the cytosol into these acidic compartments where they may directly affect antimicrobial activity. Involved in iron metabolism and host natural resistance to infection with intracellular parasites. Pathogen resistance involves sequestration of Fe(2+) and Mn(2+), cofactors of both prokaryotic and eukaryotic catalases and superoxide dismutases, not only to protect the macrophage against its own generation of reactive oxygen species, but to deny the cations to the pathogen for synthesis of its protective enzymes. This is Natural resistance-associated macrophage protein 1 (SLC11A1) from Cervus elaphus (Red deer).